The sequence spans 185 residues: Ribosome-recycling factor (185 aa).

This sequence belongs to the RRF family.

Its subcellular location is the cytoplasm. In terms of biological role, responsible for the release of ribosomes from messenger RNA at the termination of protein biosynthesis. May increase the efficiency of translation by recycling ribosomes from one round of translation to another. This is Ribosome-recycling factor from Corynebacterium diphtheriae (strain ATCC 700971 / NCTC 13129 / Biotype gravis).